The sequence spans 286 residues: MSDLSPDKPRLDLSFVRRGSRTVIDRRLFAWPFVLTRSFHTDAARPDCLSVILQTGSGAVHGEDRLTQRLTLHAGAAVCVTTQGATSVHRAEPGARAVEHVLLHVEAGASLDYRPEPRILFPDAALCQVLDLECAADAAALVTDAFTMHDPDGQGRLFRELDSKLIVRRQGKEPLLIDRMHLRDPATALFNGRRAFGSAVLMLPPTHDRAAIRLRLADAFARIDDLYAAASLLQDGAGIGVRFAAREVRQLRAGFDAVAAVVREIDLGARAAQAPRAAATARPTAA.

It belongs to the UreD family. UreD, UreF and UreG form a complex that acts as a GTP-hydrolysis-dependent molecular chaperone, activating the urease apoprotein by helping to assemble the nickel containing metallocenter of UreC. The UreE protein probably delivers the nickel.

The protein resides in the cytoplasm. Required for maturation of urease via the functional incorporation of the urease nickel metallocenter. The protein is Urease accessory protein UreD 2 of Bradyrhizobium sp. (strain ORS 278).